The chain runs to 298 residues: GTPase Era (298 aa).

The Era-type G domain occupies 3 to 170; it reads KSGFVAILGR…VQLLKDNLEE (168 aa). A G1 region spans residues 11-18; sequence GRPNVGKS. 11-18 contacts GTP; sequence GRPNVGKS. The G2 stretch occupies residues 37–41; sequence QSTRN. Residues 58–61 form a G3 region; the sequence is DTPG. GTP-binding positions include 58 to 62 and 120 to 123; these read DTPGI and NKID. The segment at 120-123 is G4; the sequence is NKID. A G5 region spans residues 149 to 151; it reads ISA. In terms of domain architecture, KH type-2 spans 201-279; the sequence is TQQEVPHSVA…YLETWVKVKK (79 aa).

It belongs to the TRAFAC class TrmE-Era-EngA-EngB-Septin-like GTPase superfamily. Era GTPase family. Monomer.

The protein resides in the cytoplasm. It localises to the cell membrane. Functionally, an essential GTPase that binds both GDP and GTP, with rapid nucleotide exchange. Plays a role in 16S rRNA processing and 30S ribosomal subunit biogenesis and possibly also in cell cycle regulation and energy metabolism. The sequence is that of GTPase Era from Streptococcus equi subsp. zooepidemicus (strain H70).